Reading from the N-terminus, the 120-residue chain is Large ribosomal subunit protein bL17 (120 aa).

The protein belongs to the bacterial ribosomal protein bL17 family. Part of the 50S ribosomal subunit. Contacts protein L32.

The protein is Large ribosomal subunit protein bL17 of Shouchella clausii (strain KSM-K16) (Alkalihalobacillus clausii).